We begin with the raw amino-acid sequence, 121 residues long: Met-lysine-1b (121 aa).

Positions 1–22 (MKSFVFALALIVAFACISESKS) are cleaved as a signal peptide. The propeptide occupies 23–69 (DHTGYEEEENLEDSELTDLVAAALLEELAEASEMDDLSYTEEAGGER). The residue at position 120 (Met120) is a Methionine amide.

As to expression, expressed by the venom gland.

The protein localises to the secreted. Shows no antimicrobial activity against Gram-positive bacterium B.subtilis B-501 or Gram-negative bacterium E.coli DH5-alpha at concentrations up to 20 ug/ml. Shows no toxicity towards insect (S.carnaria) larvae. This chain is Met-lysine-1b, found in Lachesana tarabaevi (Spider).